The sequence spans 251 residues: Chlorophyll a-b binding protein 4, chloroplastic (251 aa).

Ser35 is modified (phosphoserine). Trp57 is a chlorophyll b binding site. Residues Phe77 and Glu96 each contribute to the chlorophyll a site. Arg101 contributes to the chlorophyll b binding site. Helical transmembrane passes span 102-122 (WAML…IGII) and 135-155 (YFAS…YVEI). Residues Ser138, Val144, Glu154, and Arg157 each coordinate chlorophyll b. Lys204, Glu205, Asn208, Arg210, Gln222, and His237 together coordinate chlorophyll a.

Belongs to the light-harvesting chlorophyll a/b-binding (LHC) protein family. In terms of assembly, the LHC complex consists of chlorophyll a-b binding proteins. Red-emitting heterodimer with LHCA1. Requires Binds at least 14 chlorophylls (8 Chl-a and 6 Chl-b) and carotenoids such as lutein and neoxanthin. as cofactor. In terms of processing, photoregulated by reversible phosphorylation of its threonine residues.

The protein resides in the plastid. It localises to the chloroplast thylakoid membrane. In terms of biological role, the light-harvesting complex (LHC) functions as a light receptor, it captures and delivers excitation energy to photosystems with which it is closely associated. The chain is Chlorophyll a-b binding protein 4, chloroplastic from Arabidopsis thaliana (Mouse-ear cress).